The following is a 93-amino-acid chain: Integration host factor subunit beta (93 aa).

Positions 59–93 (RVGRNPKTGQSVSLDGKFVPHFKPGKELRDRVNDD) are disordered. Basic and acidic residues predominate over residues 82–93 (PGKELRDRVNDD).

It belongs to the bacterial histone-like protein family. As to quaternary structure, heterodimer of an alpha and a beta chain.

This protein is one of the two subunits of integration host factor, a specific DNA-binding protein that functions in genetic recombination as well as in transcriptional and translational control. In Stutzerimonas stutzeri (strain A1501) (Pseudomonas stutzeri), this protein is Integration host factor subunit beta.